Here is a 336-residue protein sequence, read N- to C-terminus: Probable RNA methyltransferase Anae109_4379 (336 aa).

The Proton acceptor role is filled by Glu-86. One can recognise a Radical SAM core domain in the interval 93–322 (FDTHHTVCLS…PIVRRYSGGQ (230 aa)). The cysteines at positions 100 and 328 are disulfide-linked. [4Fe-4S] cluster-binding residues include Cys-107, Cys-111, and Cys-114. S-adenosyl-L-methionine-binding positions include 154 to 155 (GE), Ser-186, and 209 to 211 (SLN). Cys-328 (S-methylcysteine intermediate) is an active-site residue.

Belongs to the radical SAM superfamily. RlmN family. [4Fe-4S] cluster serves as cofactor.

It is found in the cytoplasm. The protein is Probable RNA methyltransferase Anae109_4379 of Anaeromyxobacter sp. (strain Fw109-5).